Consider the following 424-residue polypeptide: Putative chloroquine resistance transporter (424 aa).

At 1–56 (MTGMKKGKNKKKNVKNDERYKELDSLISNDSEIGNNSRWGGAKRICKLIGNEMRNN) the chain is on the cytoplasmic side. A helical membrane pass occupies residues 57 to 77 (IYVYLLSILYLCVSVMNKVFS). The Vacuolar portion of the chain corresponds to 78 to 88 (KRTLNKIGNYS). An N-linked (GlcNAc...) asparagine glycan is attached at N86. A helical membrane pass occupies residues 89 to 109 (FVTSEVHNMICTIVFQLLYFI). Residues 110–125 (YRKTSNPASRNESQKN) lie on the Cytoplasmic side of the membrane. A helical membrane pass occupies residues 126–146 (FGWQFFLISLLDASTVIITMI). At 147–156 (GLTRTTGNIQ) the chain is on the vacuolar side. The chain crosses the membrane as a helical span at residues 157 to 177 (SFIMQLIIPVNMYFCFIFLGY). At 178-180 (RYH) the chain is on the cytoplasmic side. The chain crosses the membrane as a helical span at residues 181–201 (LFNYLGAFIILITIAAVETVL). Residues 202-209 (SYETQSDN) are Vacuolar-facing. The helical transmembrane segment at 210–230 (SIIFNLIMIFALIPLSFSNMT) threads the bilayer. Topologically, residues 231–248 (REVVFKKHKINIIRLNAM) are cytoplasmic. The helical transmembrane segment at 249–269 (VALFQFFTSLLVLPVYNISFL) threads the bilayer. The Vacuolar segment spans residues 270 to 317 (KEIYMPFSEMGTNINDGLRCLFYGQSTIVENCGVGMVKMCDQCEGAWK). 2 disulfide bridges follow: C289/C312 and C301/C309. The helical transmembrane segment at 318–338 (TFITYSFFNICDNLLVCYIID) threads the bilayer. The Cytoplasmic segment spans residues 339 to 346 (KFSTMTYT). A helical transmembrane segment spans residues 347–367 (IVSCIQGPAITIAYYFKFLAG). Topologically, residues 368 to 377 (DVVRQPRLLD) are vacuolar. The chain crosses the membrane as a helical span at residues 378–398 (FLTLFGYLLGTIIYRIGNIIL). At 399 to 424 (EKKKMLKALNTDGSEAELTSIETSTA) the chain is on the cytoplasmic side.

The protein belongs to the CRT-like transporter family.

It localises to the vacuole membrane. Its function is as follows. Nutrient transporter. Involved in maintaining the osmotic homeostasis of the digestive vacuole. The sequence is that of Putative chloroquine resistance transporter from Plasmodium chabaudi.